The following is a 601-amino-acid chain: MCGIVGYIGTNNAKGILLEGLEKLEYRGYDSAGIALQNKDLVTVVKEKGRIADLASLVPSDAFGTTGIGHTRWATHGKPNHENAHPHQSKSGRFTIVHNGVIENYTLLKEEYLKNHSFISDTDTEVIVQLIELFAEKLSTKEAFKKALSLLHGSYAICLIDQTDTETLYAAKNKSPLLIGKGENFNVIASDAMAVLKETDEFVEIMDKEIVIVTKDGFTLETLEGEEVSRASYTAELDASDIEKGTYPHYMLKEIDEQPAVTRKIIQAYQNEAGEINVDQTILDEILSSDRIHIVACGTSYHAGLVGKNLIEKMAKIPVEVHVSSEFGYNLPLMSKKPLFIFITQSGETADSRQCLVKVKELGYRTLTLTNVPGSTLDREADHSMYLYAGPEIAVASTKAYTAQISVLAVLAVSLGREIGDAEALSINLAAELGIVATAMEAMVSSKEVIEHIAGEYLATSRNAFFLGRNIDYFVAMEAALKLKEISYIQAEGFASGELKHGTIALIEDGTPVLALITQESINWNIRGNVNEVLARGAKTCVFAMENVAQPGDRFVIPQVHPLLTPLASVIPCQLLAYYAALHRDCDVDKPRNLAKSVTVE.

The active-site Nucleophile; for GATase activity is Cys2. One can recognise a Glutamine amidotransferase type-2 domain in the interval 2-216; it reads CGIVGYIGTN…DKEIVIVTKD (215 aa). SIS domains follow at residues 282 to 421 and 453 to 591; these read ILDE…EIGD and IAGE…VDKP. The active-site For Fru-6P isomerization activity is the Lys596.

In terms of assembly, homodimer.

Its subcellular location is the cytoplasm. The catalysed reaction is D-fructose 6-phosphate + L-glutamine = D-glucosamine 6-phosphate + L-glutamate. Functionally, catalyzes the first step in hexosamine metabolism, converting fructose-6P into glucosamine-6P using glutamine as a nitrogen source. This chain is Glutamine--fructose-6-phosphate aminotransferase [isomerizing], found in Listeria innocua serovar 6a (strain ATCC BAA-680 / CLIP 11262).